The chain runs to 208 residues: Ribonuclease HII (208 aa).

The region spanning 17 to 208 (LRVCGIDEAG…SFRLRQLGEK (192 aa)) is the RNase H type-2 domain. Residues Asp23, Glu24, and Asp120 each coordinate a divalent metal cation.

The protein belongs to the RNase HII family. It depends on Mn(2+) as a cofactor. Mg(2+) is required as a cofactor.

Its subcellular location is the cytoplasm. The catalysed reaction is Endonucleolytic cleavage to 5'-phosphomonoester.. Functionally, endonuclease that specifically degrades the RNA of RNA-DNA hybrids. The sequence is that of Ribonuclease HII from Chlorobium luteolum (strain DSM 273 / BCRC 81028 / 2530) (Pelodictyon luteolum).